The sequence spans 192 residues: Der GTPase-activating protein YihI (192 aa).

Residues 1 to 12 (MSAKQPNRKPAG) are compositionally biased toward basic residues. Disordered regions lie at residues 1-87 (MSAK…IKEK) and 145-192 (DTDD…PKKK). Residues 13–26 (KRKESDASAQEGRE) are compositionally biased toward basic and acidic residues. Positions 27–36 (RKRAAKRKGL) are enriched in basic residues. Residues 145 to 172 (DTDDDEDEADFDEADFDEPGQPASEEEL) show a composition bias toward acidic residues. Residues 183–192 (PEPKPEPKKK) show a composition bias toward basic and acidic residues.

The protein belongs to the YihI family. In terms of assembly, interacts with Der.

Its function is as follows. A GTPase-activating protein (GAP) that modifies Der/EngA GTPase function. May play a role in ribosome biogenesis. This is Der GTPase-activating protein YihI from Aeromonas hydrophila subsp. hydrophila (strain ATCC 7966 / DSM 30187 / BCRC 13018 / CCUG 14551 / JCM 1027 / KCTC 2358 / NCIMB 9240 / NCTC 8049).